The sequence spans 76 residues: Small ribosomal subunit protein bS18 (76 aa).

The protein belongs to the bacterial ribosomal protein bS18 family. Part of the 30S ribosomal subunit. Forms a tight heterodimer with protein bS6.

Functionally, binds as a heterodimer with protein bS6 to the central domain of the 16S rRNA, where it helps stabilize the platform of the 30S subunit. This Marinobacter nauticus (strain ATCC 700491 / DSM 11845 / VT8) (Marinobacter aquaeolei) protein is Small ribosomal subunit protein bS18.